Reading from the N-terminus, the 470-residue chain is Cell division protein FtsP (470 aa).

Residues 1-29 (MKNCSRRQLLKTTLFSTALFSVPAPLLAA) constitute a signal peptide (tat-type signal).

This sequence belongs to the FtsP family. Post-translationally, predicted to be exported by the Tat system. The position of the signal peptide cleavage has not been experimentally proven.

The protein resides in the periplasm. Cell division protein that is required for growth during stress conditions. May be involved in protecting or stabilizing the divisomal assembly under conditions of stress. The chain is Cell division protein FtsP from Aggregatibacter aphrophilus (strain NJ8700) (Haemophilus aphrophilus).